We begin with the raw amino-acid sequence, 356 residues long: UDP-N-acetylglucosamine--N-acetylmuramyl-(pentapeptide) pyrophosphoryl-undecaprenol N-acetylglucosamine transferase (356 aa).

UDP-N-acetyl-alpha-D-glucosamine-binding positions include 12-14, N124, R163, S188, I242, 261-266, and Q287; these read TGG and ALTVSE.

This sequence belongs to the glycosyltransferase 28 family. MurG subfamily.

The protein resides in the cell inner membrane. It catalyses the reaction di-trans,octa-cis-undecaprenyl diphospho-N-acetyl-alpha-D-muramoyl-L-alanyl-D-glutamyl-meso-2,6-diaminopimeloyl-D-alanyl-D-alanine + UDP-N-acetyl-alpha-D-glucosamine = di-trans,octa-cis-undecaprenyl diphospho-[N-acetyl-alpha-D-glucosaminyl-(1-&gt;4)]-N-acetyl-alpha-D-muramoyl-L-alanyl-D-glutamyl-meso-2,6-diaminopimeloyl-D-alanyl-D-alanine + UDP + H(+). It functions in the pathway cell wall biogenesis; peptidoglycan biosynthesis. In terms of biological role, cell wall formation. Catalyzes the transfer of a GlcNAc subunit on undecaprenyl-pyrophosphoryl-MurNAc-pentapeptide (lipid intermediate I) to form undecaprenyl-pyrophosphoryl-MurNAc-(pentapeptide)GlcNAc (lipid intermediate II). This is UDP-N-acetylglucosamine--N-acetylmuramyl-(pentapeptide) pyrophosphoryl-undecaprenol N-acetylglucosamine transferase from Pseudomonas fluorescens (strain SBW25).